The sequence spans 256 residues: Hypodermin-B (256 aa).

The first 22 residues, 1–22 (MLKFVILVCSVACVFGAVVPGG), serve as a signal peptide directing secretion. The propeptide at 23–30 (MLPQLDGR) is activation peptide. The region spanning 31–254 (IVGGFEADIE…VRSWITENAK (224 aa)) is the Peptidase S1 domain. Cysteines 56 and 72 form a disulfide. Residues His71 and Asp116 each act as charge relay system in the active site. 2 disulfides stabilise this stretch: Cys180-Cys197 and Cys206-Cys230. Catalysis depends on Ser210, which acts as the Charge relay system.

It belongs to the peptidase S1 family.

It localises to the secreted. Protease that shows preferential cleavage after Arg and Lys residues. This is Hypodermin-B from Hypoderma lineatum (Early cattle grub).